A 429-amino-acid chain; its full sequence is Adenylosuccinate synthetase (429 aa).

GTP contacts are provided by residues 12–18 (GDEGKGK) and 40–42 (GHT). Residue aspartate 13 is the Proton acceptor of the active site. Residues aspartate 13 and glycine 40 each coordinate Mg(2+). IMP contacts are provided by residues 13-16 (DEGK), 38-41 (NAGH), threonine 127, arginine 141, glutamine 222, threonine 237, and arginine 301. Histidine 41 (proton donor) is an active-site residue. Position 297 to 303 (297 to 303 (ATTGRPR)) interacts with substrate. GTP is bound by residues arginine 303, 329 to 331 (KLD), and 411 to 413 (SLG).

This sequence belongs to the adenylosuccinate synthetase family. In terms of assembly, homodimer. The cofactor is Mg(2+).

Its subcellular location is the cytoplasm. The catalysed reaction is IMP + L-aspartate + GTP = N(6)-(1,2-dicarboxyethyl)-AMP + GDP + phosphate + 2 H(+). It functions in the pathway purine metabolism; AMP biosynthesis via de novo pathway; AMP from IMP: step 1/2. In terms of biological role, plays an important role in the de novo pathway of purine nucleotide biosynthesis. Catalyzes the first committed step in the biosynthesis of AMP from IMP. This is Adenylosuccinate synthetase from Endomicrobium trichonymphae.